The chain runs to 255 residues: Reticulon-like protein B3 (255 aa).

Positions 1–25 (MAEEHKHEESIMEKISEKIHGHDDS) are enriched in basic and acidic residues. Positions 1–38 (MAEEHKHEESIMEKISEKIHGHDDSSSSSSDSDDDKNS) are disordered. An N-acetylalanine modification is found at Ala-2. Positions 64–255 (PADIFLWRNK…GAFAFIKKKD (192 aa)) constitute a Reticulon domain. Helical transmembrane passes span 75 to 95 (VSGGVLGAATVSWILFELLEY), 97 to 117 (LLTLFGHISILALAVLFLWSS), and 186 to 206 (CNFLTLIYIATVLLFTIPVLY).

The protein resides in the endoplasmic reticulum membrane. It localises to the vacuole membrane. This chain is Reticulon-like protein B3 (RTNLB3), found in Arabidopsis thaliana (Mouse-ear cress).